Here is a 324-residue protein sequence, read N- to C-terminus: Interactor of constitutive active ROPs 4 (324 aa).

Disordered stretches follow at residues 1 to 74 (MPKP…SGLE), 91 to 156 (LAKA…ASKE), 175 to 201 (SLSE…KAKE), and 289 to 324 (FVGS…KGQK). Residues 13-28 (QRQSPRLRTSLLSTSS) are compositionally biased toward low complexity. Basic and acidic residues-rich tracts occupy residues 29–50 (DPHH…DRRS), 95–106 (EAAKKRAQEELH), and 118–156 (PERD…ASKE). Residues 62 to 266 (SQKKLGSRIS…ADAAAAVLSG (205 aa)) are a coiled coil. The span at 313–324 (MFGDLWKKKGQK) shows a compositional bias: basic and acidic residues.

It belongs to the ICR family. In terms of assembly, interacts with ARAC11 in vitro.

Acts as a scaffold, mediating interaction of ROPs with different proteins. The sequence is that of Interactor of constitutive active ROPs 4 (ICR4) from Arabidopsis thaliana (Mouse-ear cress).